The sequence spans 432 residues: Enolase (432 aa).

Gln163 is a binding site for (2R)-2-phosphoglycerate. Glu205 (proton donor) is an active-site residue. Mg(2+) is bound by residues Asp242, Glu288, and Asp315. (2R)-2-phosphoglycerate-binding residues include Lys340, Arg369, Ser370, and Lys391. Catalysis depends on Lys340, which acts as the Proton acceptor.

Belongs to the enolase family. Homodimer. Mg(2+) is required as a cofactor.

The protein localises to the cytoplasm. It is found in the secreted. It localises to the cell surface. The enzyme catalyses (2R)-2-phosphoglycerate = phosphoenolpyruvate + H2O. It functions in the pathway carbohydrate degradation; glycolysis; pyruvate from D-glyceraldehyde 3-phosphate: step 4/5. With respect to regulation, the covalent binding to the substrate causes inactivation of the enzyme, and possibly serves as a signal for the export of the protein. Its function is as follows. Catalyzes the reversible conversion of 2-phosphoglycerate (2-PG) into phosphoenolpyruvate (PEP). It is essential for the degradation of carbohydrates via glycolysis. The chain is Enolase from Enterococcus hirae.